The following is a 920-amino-acid chain: MDFNTSTRSKSQPVQRNNYKVLYDPELGIKENLGRKIIYRFNGVSKPPLVVRDPRLKNPIYARGIPKSGRPFLKSLQTINYDYNENSLGPEPPTQVFVSNISPLVTSEQLRYHFKSFGEVFDLDLKLNPYTGTSLGLCCISFDKRSSISVAAHSAKIAVQQANGLRFSGKPLSVVLDRDGSLCEEAFKKALNAVEKQFQEETLQKQRFEREDESSRQKLSAAMNEDIPPWRQPSKNSQTLSNGDLQHSKVQNVDQKSGFLTSSETDVPKNINDYIYLLIDDRFVPPDRVYYTDIKHHFRKFLYEKIYMNKDGFYITFNNYREASNCYRALDRTYVQNCRIKLKFHDIPSRTKEDGKKSAVRRVVLPPEEAYAEATSVVLRDLEAALLRDVKSKIIGPAIFKYLHSMPKPSVKEELQENLLVSSTSVPDVPLKIESTVGKLPSLPKFKKRVDSSKMNLSAGSKTKSKLQRRRRRRHEARPLHYQLNQMYNSSASEAESDQELLLSSGDERVERGKIGSIKSVKSDEATPVFSDTSDENDKFHRFRTKSKISKKKYEKMEVDYTSSSETESDASILSPSAAIPKSGSAIKDELISPKKEIDEVLALAPKWRINEFDETGSVYYGALPYNYPEDDVLLDLDGLQYLVKNDEDYSYLQEALKDEPLMDINDPNFWAYERKSCKFKNGDVKYGDTAILPEPKGYFRSNTSGSAKSEGYYIIPTTEKSLYLPLRNRSTIDTISHSTSRITSRMNRVNNRRLAAGVEKSQLPAEADLLRFNALKARKKQLHFGPSRIHTLGLFAMENIDKNDMVIEYIGEIIRQRVADNREKNYVREGIGDSYLFRIDEDVIVDATKKGNIARFINHSCAPNCIARIIRVEGKRKIVIYADRDIMHGEELTYDYKFPEEADKIPCLCGAPTCRGYLN.

Residues 94–179 (TQVFVSNISP…KPLSVVLDRD (86 aa)) form the RRM domain. A compositionally biased stretch (basic and acidic residues) spans 205–216 (KQRFEREDESSR). 2 disordered regions span residues 205–242 (KQRFEREDESSRQKLSAAMNEDIPPWRQPSKNSQTLSN) and 448–485 (KRVDSSKMNLSAGSKTKSKLQRRRRRRHEARPLHYQLN). Composition is skewed to polar residues over residues 233–242 (PSKNSQTLSN) and 453–462 (SKMNLSAGSK). Over residues 463–476 (TKSKLQRRRRRRHE) the composition is skewed to basic residues. The short motif at 749–754 (RVNNRR) is the RxxxRR motif element. The 118-residue stretch at 781 to 898 (KQLHFGPSRI…HGEELTYDYK (118 aa)) folds into the SET domain. Tyr-897 is an S-adenosyl-L-methionine binding site. In terms of domain architecture, Post-SET spans 904–920 (DKIPCLCGAPTCRGYLN).

Belongs to the class V-like SAM-binding methyltransferase superfamily. Component of the Set1C/COMPASS complex composed of ash2, sdc1, set1, shg1, spp1, swd1, swd2 and swd3.

Its subcellular location is the nucleus. It localises to the chromosome. The enzyme catalyses L-lysyl(4)-[histone H3] + 3 S-adenosyl-L-methionine = N(6),N(6),N(6)-trimethyl-L-lysyl(4)-[histone H3] + 3 S-adenosyl-L-homocysteine + 3 H(+). It catalyses the reaction N(6)-methyl-L-lysyl(4)-[histone H3] + S-adenosyl-L-methionine = N(6),N(6)-dimethyl-L-lysyl(4)-[histone H3] + S-adenosyl-L-homocysteine + H(+). It carries out the reaction N(6),N(6)-dimethyl-L-lysyl(4)-[histone H3] + S-adenosyl-L-methionine = N(6),N(6),N(6)-trimethyl-L-lysyl(4)-[histone H3] + S-adenosyl-L-homocysteine + H(+). Catalytic component of the COMPASS (Set1C) complex that specifically mono-, di- and trimethylates histone H3 to form H3K4me1/2/3. Binds RNA which might negatively affect its histone methyltransferase activity. COMPASS recognizes ubiquitinated H2B on one face of the nucleosome which stimulates the methylation of H3 on the opposing face. Methylation promotes maintenance of active chromatin states at euchromatic chromosomal domains and is present throughout the cell cycle. Plays a role in telomere maintenance and DNA repair in an ATM kinase rad3-dependent pathway. Required for efficient telomeric and centromeric silencing. This is Histone-lysine N-methyltransferase, H3 lysine-4 specific from Schizosaccharomyces pombe (strain 972 / ATCC 24843) (Fission yeast).